We begin with the raw amino-acid sequence, 128 residues long: Large ribosomal subunit protein bL12 (128 aa).

This sequence belongs to the bacterial ribosomal protein bL12 family. In terms of assembly, homodimer. Part of the ribosomal stalk of the 50S ribosomal subunit. Forms a multimeric L10(L12)X complex, where L10 forms an elongated spine to which 2 to 4 L12 dimers bind in a sequential fashion. Binds GTP-bound translation factors.

Its function is as follows. Forms part of the ribosomal stalk which helps the ribosome interact with GTP-bound translation factors. Is thus essential for accurate translation. This chain is Large ribosomal subunit protein bL12, found in Synechococcus sp. (strain ATCC 27144 / PCC 6301 / SAUG 1402/1) (Anacystis nidulans).